A 156-amino-acid polypeptide reads, in one-letter code: uncharacterized protein (156 aa).

Residues 1 to 22 (MFGKVSSLLVFASFLIIQGAFA) form the signal peptide. Serine 129 carries the GPI-anchor amidated serine lipid modification. The propeptide at 130–156 (GSPVRFSKSSLLIVSLLSIAAFAALVL) is removed in mature form.

It localises to the cell membrane. This is an uncharacterized protein from Schizosaccharomyces pombe (strain 972 / ATCC 24843) (Fission yeast).